The primary structure comprises 224 residues: ATP phosphoribosyltransferase (224 aa).

It belongs to the ATP phosphoribosyltransferase family. Short subfamily. As to quaternary structure, heteromultimer composed of HisG and HisZ subunits.

The protein localises to the cytoplasm. The enzyme catalyses 1-(5-phospho-beta-D-ribosyl)-ATP + diphosphate = 5-phospho-alpha-D-ribose 1-diphosphate + ATP. It participates in amino-acid biosynthesis; L-histidine biosynthesis; L-histidine from 5-phospho-alpha-D-ribose 1-diphosphate: step 1/9. Functionally, catalyzes the condensation of ATP and 5-phosphoribose 1-diphosphate to form N'-(5'-phosphoribosyl)-ATP (PR-ATP). Has a crucial role in the pathway because the rate of histidine biosynthesis seems to be controlled primarily by regulation of HisG enzymatic activity. The chain is ATP phosphoribosyltransferase from Cupriavidus necator (strain ATCC 17699 / DSM 428 / KCTC 22496 / NCIMB 10442 / H16 / Stanier 337) (Ralstonia eutropha).